A 178-amino-acid chain; its full sequence is Tetratricopeptide repeat protein 9C (178 aa).

TPR repeat units follow at residues 15 to 48, 79 to 114, and 115 to 148; these read ASSF…LRSL, ADCY…QPEN, and VKAL…APKD.

It belongs to the TTC9 family.

This Xenopus tropicalis (Western clawed frog) protein is Tetratricopeptide repeat protein 9C (ttc9c).